Here is a 960-residue protein sequence, read N- to C-terminus: MQPDRSFQSFASRYRQSSFTYDVKRDVYNEENFQQEHRKKTASSGNVDIDISTVSHHVQCRCSWHKFRRCLLTVFPFLEWMCFYRFKDWLLGDLLAGISVGLVQIPQVLMLGLLARHLIPPLNVSYAAFCASVIYGIFGSCHQMSIGTFFLVSALAINVLRTQPFNRGHLLLGTFIQADFSNTSFYENYNRSLSSVASVTLLTGIIQLSMGMLGFGFIVAYIPEAAISAYLAATALHVMLSQLTCIFGIMISYNSGPIAFFYNIINYCLGLPKANSTSILLFLTAMVALRINKCIRISFNEYPIEFPMEVFLVLGFAAFSNKVNMATENSLMLMEMIPYSFLFPVTPDMSNLTEVLIESFSLALVSSSLLVFLGKKIASFHNYDVNSNQDLIAIGLCNVVSSFFRSYVFTGAVARTIIQDKTGGRQQFASLVGAGIMLLLMMKMARFFYRLPNAIVAGIILSNVLPYLEAVYTLPSLWRQNQYDCLIWMVTFMSAILLGLDIGLVVAVTFAFFIITVQSHRTKILLLGQIPNTNIYRSFQDYREVANIPGVKIFQCCNAITFVNVHYLKRKVLEEIEMVKMPLTEEEIYTLFSQNEEGAQRGKICRCYCNCDEPEPSPRVIYTERYEVQRGRESSFINLVRCSRFESMNTAQTMSEDQVPYITSSSSQRNPNYEEVEKVWLSDDPSRSMTITLPEASDTQVRATKLLPYSTSTILPSIHTIILDFSMVHLVDARALVVLRQMFSAFQNANILVLIAGCHSFVVRSLEKNDFFDAGITKAQLFLTLHDAVLFALSRKLPESSELSVDESETVIQETFSETDKKEESRHKTNRSLIEAPRSKSPGFSLLPDPEMEEESDLDLYSTIQMSKDHGLDLDLDLDREVEPESELEPESELDQETELEPEPEASPKPNRQKYWSLFRAIIPRSPTQTQARTQSVDRRHQNVKPYTSKADTSEDALEI.

The Cytoplasmic portion of the chain corresponds to Met1–Asp93. The helical transmembrane segment at Leu94–Leu114 threads the bilayer. The Extracellular portion of the chain corresponds to Ala115–His117. Residues Leu118–Phe138 form a helical membrane-spanning segment. A topological domain (cytoplasmic) is located at residue Gly139. The helical transmembrane segment at Ser140 to Leu160 threads the bilayer. Residues Arg161–Leu201 lie on the Extracellular side of the membrane. Asn190 carries N-linked (GlcNAc...) asparagine glycosylation. Transmembrane regions (helical) follow at residues Leu202 to Ile222 and Pro223 to Leu243. Residues Thr244–Cys268 lie on the Cytoplasmic side of the membrane. A helical membrane pass occupies residues Leu269–Leu289. Topologically, residues Arg290–Thr353 are extracellular. A helical transmembrane segment spans residues Glu354–Gly374. Residues Lys375–Asp390 are Cytoplasmic-facing. A helical transmembrane segment spans residues Leu391–Gly411. Residues Ala412 to Gln427 lie on the Extracellular side of the membrane. The chain crosses the membrane as a helical span at residues Phe428–Phe448. Over Tyr449–Asn453 the chain is Cytoplasmic. The chain crosses the membrane as a helical span at residues Ala454–Leu474. The Extracellular segment spans residues Pro475–Ser494. A helical transmembrane segment spans residues Ala495–Ile515. Residues Thr516–Ile960 are Cytoplasmic-facing. Residues Asp541 to Ala792 enclose the STAS domain. The tract at residues Ile662–Ala957 is interaction with RACGAP1. Disordered regions lie at residues Glu807 to Asp857 and Glu881 to Ile960. The segment covering Glu818 to His827 has biased composition (basic and acidic residues). Residues Pro884 to Pro904 are compositionally biased toward acidic residues. Residues Ser926 to Gln935 are compositionally biased toward polar residues.

It belongs to the SLC26A/SulP transporter (TC 2.A.53) family. As to quaternary structure, interacts with RACGAP1. Interacts with CFTR; stimulates anion transport activity of CFTR. Post-translationally, N-glycosylated.

The protein resides in the membrane. It catalyses the reaction sulfate(out) + chloride(in) = sulfate(in) + chloride(out). The enzyme catalyses oxalate(in) + chloride(out) = oxalate(out) + chloride(in). Functionally, antiporter that mediates the exchange of sulfate and oxalate against chloride ions across a membrane. Stimulates anion transport activity of CFTR. May cooperate with CFTR in the regulation of chloride and bicarbonate ions fluxes required for activation of the ADCY10/PKA pathway during sperm motility and sperm capacitation. May play a role in sperm tail differentiation and motility and hence male fertility. The sequence is that of Testis anion transporter 1 from Bos taurus (Bovine).